A 715-amino-acid polypeptide reads, in one-letter code: Tensin-4 (715 aa).

The first 18 residues, 1–18, serve as a signal peptide directing secretion; that stretch reads MSQVMSSPLLAGGHAVSL. Serine 82 is modified (phosphoserine). 4 disordered regions span residues 159 to 183, 195 to 251, 291 to 364, and 376 to 435; these read RCHDGPQHCSSPSVTPPFGSLRSGG, RSSS…SPLV, SLLH…CPPS, and LING…ARDM. The segment covering 197 to 206 has biased composition (polar residues); the sequence is SSESLIFSGN. Phosphoserine is present on serine 248. The span at 291 to 325 shows a compositional bias: low complexity; it reads SLLHSSNSSHQSSSRSLESPANSSSSLHSLGSVSL. In terms of domain architecture, SH2 spans 449 to 556; sequence WFKPNITREQ…ALPCKLTIPQ (108 aa). One can recognise a PTB domain in the interval 582–705; it reads CHTLYLSSVS…QPASQVIGLV (124 aa).

It belongs to the PTEN phosphatase protein family. Interacts (via SH2 domain) with Rho GTPase-activating protein DLC1 (via C-terminus); the interaction is independent of DLC1 tyrosine phosphorylation. Interacts with integrin ITGB1; the interaction displaces tensin TNS3 from the ITGB1 cytoplasmic tail and promotes ITGB1 stability. Interacts (via SH2 domain) with E3 ubiquitin-protein ligase CBL (phosphorylated on 'Tyr-774'); the interaction is enhanced in the presence of EGF and reduces interaction of CBL with EGFR. Interacts (via SH2 domain) with receptor tyrosine kinase MET (when phosphorylated); the interaction increases MET protein stability. In terms of processing, proteolytically cleaved by caspase-3 during apoptosis. In terms of tissue distribution, expressed at low levels in colon (at protein level). Expressed in prostate and placenta.

It is found in the cell junction. Its subcellular location is the focal adhesion. The protein resides in the cytoplasm. The protein localises to the cytoskeleton. Functionally, promotes EGF-induced cell migration by displacing tensin TNS3 from the cytoplasmic tail of integrin ITGB1 which results in dissociation of TNS3 from focal adhesions, disassembly of actin stress fibers and initiation of cell migration. Suppresses ligand-induced degradation of EGFR by reducing EGFR ubiquitination in the presence of EGF. Increases MET protein stability by inhibiting MET endocytosis and subsequent lysosomal degradation which leads to increased cell survival, proliferation and migration. The chain is Tensin-4 (TNS4) from Homo sapiens (Human).